The primary structure comprises 55 residues: Ferredoxin (55 aa).

2 consecutive 4Fe-4S ferredoxin-type domains span residues 2 to 27 and 28 to 55; these read YFIT…SPGD and SVYV…PQQK. [4Fe-4S] cluster contacts are provided by Cys-8, Cys-11, Cys-14, Cys-18, Cys-37, Cys-40, Cys-43, and Cys-47.

[4Fe-4S] cluster is required as a cofactor.

Functionally, ferredoxins are iron-sulfur proteins that transfer electrons in a wide variety of metabolic reactions. The chain is Ferredoxin from Acetivibrio thermocellus (Hungateiclostridium thermocellum).